The following is a 502-amino-acid chain: L-amino-acid oxidase BmooLAAO-I (502 aa).

An N-terminal signal peptide occupies residues Met1–Cys18. A disulfide bridge links Cys28 with Cys191. FAD contacts are provided by residues Met61–Ser62, Glu81–Ala82, Arg89, and Gly105–Arg108. Substrate is bound at residue Arg108. A glycan (N-linked (GlcNAc...) asparagine) is linked at Asn190. Residue His241 coordinates substrate. FAD is bound at residue Val279. Residues Cys349 and Cys430 are joined by a disulfide bond. Tyr390 contributes to the substrate binding site. FAD is bound by residues Glu475 and Gly482–Thr487. Residue Gly482–Trp483 coordinates substrate.

Belongs to the flavin monoamine oxidase family. FIG1 subfamily. Homodimer; non-covalently linked. Requires FAD as cofactor. In terms of processing, N-glycosylated. The enzymatic activity is not affected by deglycosylation. Expressed by the venom gland.

It localises to the secreted. It catalyses the reaction an L-alpha-amino acid + O2 + H2O = a 2-oxocarboxylate + H2O2 + NH4(+). The catalysed reaction is L-leucine + O2 + H2O = 4-methyl-2-oxopentanoate + H2O2 + NH4(+). The enzyme catalyses L-phenylalanine + O2 + H2O = 3-phenylpyruvate + H2O2 + NH4(+). It carries out the reaction L-tryptophan + O2 + H2O = indole-3-pyruvate + H2O2 + NH4(+). It catalyses the reaction L-methionine + O2 + H2O = 4-methylsulfanyl-2-oxobutanoate + H2O2 + NH4(+). The catalysed reaction is L-isoleucine + O2 + H2O = (S)-3-methyl-2-oxopentanoate + H2O2 + NH4(+). The enzyme catalyses L-histidine + O2 + H2O = 3-(imidazol-5-yl)pyruvate + H2O2 + NH4(+). It carries out the reaction L-tyrosine + O2 + H2O = 3-(4-hydroxyphenyl)pyruvate + H2O2 + NH4(+). It catalyses the reaction L-alanine + O2 + H2O = pyruvate + H2O2 + NH4(+). The catalysed reaction is L-valine + O2 + H2O = 3-methyl-2-oxobutanoate + H2O2 + NH4(+). Its activity is regulated as follows. Its enzymatic activities is reduced when it is exposed to Ca(2+), Zn(2+), Al(3+), Cu(2+) or Ni(2+) salts. In terms of biological role, catalyzes an oxidative deamination of predominantly hydrophobic and aromatic L-amino acids, thus producing hydrogen peroxide that may contribute to the toxicity of the venom. Shows very high activity on L-Met, and L-Leu, high activity on L-Ile, L-Phe and L-Tyr and moderate activity on L-His, L-Val and L-Ala. Exhibits diverse biological activities, such as edema, apoptosis of tumor cell lines, antibacterial activities against both Gram-positive and Gram-negative bacteria, as well as induction of platelet aggregation. Effects of snake L-amino oxidases on platelets are controversial, since they either induce aggregation or inhibit agonist-induced aggregation. These different effects are probably due to different experimental conditions. Unlike other snake venom L-amino acid oxidases, does not induce hemorrhage. It may also induce hemolysis. Has parasiticidal activities against and leishmania, as a result of enzyme-catalyzed hydrogen peroxide production. This Bothrops moojeni (Lance-headed viper) protein is L-amino-acid oxidase BmooLAAO-I.